Here is a 301-residue protein sequence, read N- to C-terminus: ADP-ribosyl cyclase/cyclic ADP-ribose hydrolase 1 (301 aa).

Residues 1-21 (MANCEFSPVSGDKPCCRLSRR) lie on the Cytoplasmic side of the membrane. Residues 22-43 (AQVCLGVCLLVLLILVVVVAVV) form a helical; Signal-anchor for type II membrane protein membrane-spanning segment. The Extracellular portion of the chain corresponds to 44-301 (LPRWRQQWSG…PEDSSCLSGI (258 aa)). Cystine bridges form between C68/C83, C100/C181, and C161/C174. N101 carries N-linked (GlcNAc...) asparagine glycosylation. Residue C120 is part of the active site. N-linked (GlcNAc...) asparagine glycosylation is present at N121. C202 is a catalytic residue. N-linked (GlcNAc...) asparagine glycans are attached at residues N210 and N220. 2 cysteine pairs are disulfide-bonded: C255–C276 and C288–C297.

Belongs to the ADP-ribosyl cyclase family. Homodimer.

It is found in the cell surface. Its subcellular location is the membrane. It carries out the reaction NAD(+) = cyclic ADP-beta-D-ribose + nicotinamide + H(+). It catalyses the reaction 2'-phospho-cyclic ADP-ribose + nicotinate = nicotinate-adenine dinucleotide phosphate. The enzyme catalyses NAD(+) + H2O = ADP-D-ribose + nicotinamide + H(+). The catalysed reaction is nicotinate + NADP(+) = nicotinate-adenine dinucleotide phosphate + nicotinamide. ATP inhibits the cADPR hydrolyzing activity. Functionally, synthesizes cyclic ADP-ribose (cADPR), a second messenger for glucose-induced insulin secretion. Synthesizes the Ca(2+) mobilizer nicotinate-adenine dinucleotide phosphate, NAADP(+), from 2'-phospho-cADPR and nicotinic acid, as well as from NADP(+) and nicotinic acid. Also has cADPR hydrolase activity. This chain is ADP-ribosyl cyclase/cyclic ADP-ribose hydrolase 1 (CD38), found in Macaca fascicularis (Crab-eating macaque).